A 1396-amino-acid chain; its full sequence is Melanoma inhibitory activity protein 2 (1396 aa).

Residues 1–22 (MAEVSVQRILLLVVSLAKCLEG) form the signal peptide. The Lumenal portion of the chain corresponds to 23-604 (TKLLAHLKKC…YGFMSSALSP (582 aa)). Residues 39–101 (TLISRVLALR…PRDAVEIEEV (63 aa)) form the SH3 domain. Asn59 carries N-linked (GlcNAc...) asparagine glycosylation. 2 disordered regions span residues 197 to 288 (EGAG…VPDE) and 331 to 361 (ESNP…TDKE). The span at 243–258 (SDTEPTQELALEEESD) shows a compositional bias: acidic residues. N-linked (GlcNAc...) asparagine glycosylation occurs at Asn366. Disordered regions lie at residues 396–421 (DKGE…PEKE) and 525–557 (PMEE…ELSV). An intramembrane segment occupies 605–625 (IEILLESVVAALPEDMRADFN). Residues 626–628 (PSG) lie on the Lumenal side of the membrane. Residues 629–649 (FSLELAVCVLSVGLLAVVLFL) form a helical membrane-spanning segment. Topologically, residues 650 to 1396 (WRGFRSIRSR…AADPPETQEA (747 aa)) are cytoplasmic. Residues 651-1243 (RGFRSIRSRF…RSYNMPSLDK (593 aa)) form a mediates interaction with MIA3 region. Coiled-coil stretches lie at residues 693–867 (YEGL…LVTS) and 914–1082 (AAKL…NRQK). The tract at residues 1103–1396 (PNTAFGREHS…AADPPETQEA (294 aa)) is disordered. Residues 1105-1396 (TAFGREHSPY…AADPPETQEA (292 aa)) are proline-rich domain (PRD); probably mediates interaction with COPII coat subunits. The span at 1135–1146 (LLEGPLRLSPLL) shows a compositional bias: low complexity. The span at 1165–1179 (MNTERGESSYDRLSD) shows a compositional bias: basic and acidic residues. The span at 1252-1269 (MESSGNGTKDNLGNSNVP) shows a compositional bias: polar residues. Composition is skewed to pro residues over residues 1331 to 1342 (RDFPGPPLPPFP) and 1351 to 1368 (GFPP…PPPH).

This sequence belongs to the MIA/OTOR family. Interacts with MIA3. Interacts with the COPII coat subunits SEC23A, SEC23B and maybe SEC24C. Interacts with PREB; recruits PREB to endoplasmic reticulum exit sites. Interacts with APOB. Isoform 1 is expressed in liver (at protein level). Isoform 2 is highly expressed in liver and weakly in testis.

It is found in the endoplasmic reticulum membrane. In terms of biological role, plays a role in the transport of cargos that are too large to fit into COPII-coated vesicles and require specific mechanisms to be incorporated into membrane-bound carriers and exported from the endoplasmic reticulum. Plays a role in the secretion of lipoproteins, pre-chylomicrons and pre-VLDLs, by participating in their export from the endoplasmic reticulum. Thereby, may play a role in cholesterol and triglyceride homeostasis. Required for collagen VII (COL7A1) secretion by loading COL7A1 into transport carriers and recruiting PREB/SEC12 at the endoplasmic reticulum exit sites. This chain is Melanoma inhibitory activity protein 2, found in Mus musculus (Mouse).